We begin with the raw amino-acid sequence, 138 residues long: Putative pre-16S rRNA nuclease (138 aa).

This sequence belongs to the YqgF nuclease family.

Its subcellular location is the cytoplasm. Its function is as follows. Could be a nuclease involved in processing of the 5'-end of pre-16S rRNA. This chain is Putative pre-16S rRNA nuclease, found in Polaromonas sp. (strain JS666 / ATCC BAA-500).